We begin with the raw amino-acid sequence, 196 residues long: Ribosome maturation factor RimP (196 aa).

Positions 163-196 are disordered; the sequence is GLAPSKPTGPAPKRPKPNTNSSSNEPAAKKPRAE.

Belongs to the RimP family.

Its subcellular location is the cytoplasm. Functionally, required for maturation of 30S ribosomal subunits. The polypeptide is Ribosome maturation factor RimP (Stenotrophomonas maltophilia (strain K279a)).